The primary structure comprises 88 residues: Small ribosomal subunit protein bS21 (88 aa).

Residues A58–R88 are disordered. Low complexity predominate over residues R73–R88.

This sequence belongs to the bacterial ribosomal protein bS21 family.

In Mesorhizobium japonicum (strain LMG 29417 / CECT 9101 / MAFF 303099) (Mesorhizobium loti (strain MAFF 303099)), this protein is Small ribosomal subunit protein bS21.